The chain runs to 92 residues: Putative regulatory protein CTN_0877 (92 aa).

Belongs to the RemA family.

This is Putative regulatory protein CTN_0877 from Thermotoga neapolitana (strain ATCC 49049 / DSM 4359 / NBRC 107923 / NS-E).